A 129-amino-acid chain; its full sequence is Ribosome-binding factor A (129 aa).

The protein belongs to the RbfA family. In terms of assembly, monomer. Binds 30S ribosomal subunits, but not 50S ribosomal subunits or 70S ribosomes.

It localises to the cytoplasm. Its function is as follows. One of several proteins that assist in the late maturation steps of the functional core of the 30S ribosomal subunit. Associates with free 30S ribosomal subunits (but not with 30S subunits that are part of 70S ribosomes or polysomes). Required for efficient processing of 16S rRNA. May interact with the 5'-terminal helix region of 16S rRNA. The sequence is that of Ribosome-binding factor A from Ectopseudomonas mendocina (strain ymp) (Pseudomonas mendocina).